A 371-amino-acid chain; its full sequence is Choline kinase B1 (371 aa).

It belongs to the choline/ethanolamine kinase family. Mg(2+) serves as cofactor.

It carries out the reaction choline + ATP = phosphocholine + ADP + H(+). This Caenorhabditis elegans protein is Choline kinase B1 (ckb-1).